The chain runs to 397 residues: MKILVLNCGSSSVKYQLFDMEDESVLAKGLVERIGIDGSVLTHRPAGKEKLVRETEIPDHKVAIRLCLEALTDPHYGVIKDYSEIGAIGHRIVHGGTFPHSVLVDASTKKAISELEVLAPLHNGPALRGIEACEAILPGTPQVTAFDTAFHQGMPDYAYTYSLPYELCQKHLIRRYGAHGTSHQYVALRAAAIVGKPLEELKVITCHLGNGSSITAIKNAKSYDTSMGFTPLAGLTMGTRCGDIDPAIVPFLMEKEGYTPAEMDQVMNRRSGVLGVSGLSSDFRDIEAAMAEGNDRARLAWEVFVHSAKKYIGAYAALLNGLDILVFTAGLGENSIAAREAICRDMDYLGIKIDPEKNQVRGQEREITAAGARVRTFVIPTNEELMIARDTLALVQA.

Asn7 is a Mg(2+) binding site. Lys14 serves as a coordination point for ATP. Arg91 is a substrate binding site. Catalysis depends on Asp147, which acts as the Proton donor/acceptor. ATP contacts are provided by residues 207–211, 282–284, and 330–334; these read HLGNG, DFR, and GLGEN. Glu383 contributes to the Mg(2+) binding site.

Belongs to the acetokinase family. As to quaternary structure, homodimer. Requires Mg(2+) as cofactor. Mn(2+) is required as a cofactor.

Its subcellular location is the cytoplasm. The enzyme catalyses acetate + ATP = acetyl phosphate + ADP. It participates in metabolic intermediate biosynthesis; acetyl-CoA biosynthesis; acetyl-CoA from acetate: step 1/2. Catalyzes the formation of acetyl phosphate from acetate and ATP. Can also catalyze the reverse reaction. The polypeptide is Acetate kinase (Moorella thermoacetica (strain ATCC 39073 / JCM 9320)).